The following is a 172-amino-acid chain: Ubiquitin-conjugating enzyme E2 2 (172 aa).

The 147-residue stretch at proline 4 to glutamate 150 folds into the UBC core domain. The Glycyl thioester intermediate role is filled by cysteine 88. Serine 120 is subject to Phosphoserine; by SGV1. Residues valine 145 to aspartate 172 are disordered. Residues aspartate 151 to aspartate 172 are compositionally biased toward acidic residues.

This sequence belongs to the ubiquitin-conjugating enzyme family. In terms of assembly, forms a heterodimer complexes with the E3 enzymes BRE1, RAD18 and UBR1. Also interacts with UBR2, RTF1, PAF1 and the RNA polymerase II hyperphosphorylated form. The interaction with RNA polymerase II is BRE1- and PAF1-dependent. The N-terminus is blocked.

Its subcellular location is the cytoplasm. It localises to the nucleus. It catalyses the reaction S-ubiquitinyl-[E1 ubiquitin-activating enzyme]-L-cysteine + [E2 ubiquitin-conjugating enzyme]-L-cysteine = [E1 ubiquitin-activating enzyme]-L-cysteine + S-ubiquitinyl-[E2 ubiquitin-conjugating enzyme]-L-cysteine.. Its pathway is protein modification; protein ubiquitination. E2 ubiquitin-conjugating enzyme that accepts ubiquitin from the ubiquitin-activating enzyme E1 and transfers it to a E3 ubiquitin-protein ligase. In association with the E3 enzyme BRE1 and LGE1, it plays a role in transcription regulation by catalyzing the monoubiquitination of histone H2B to form H2BK123ub1. H2BK123ub1 gives a specific tag for epigenetic transcriptional activation, elongation by RNA polymerase II, telomeric silencing, and is also a prerequisite for H3K4me and H3K79me formation. In association with the E3 enzyme RAD18, it catalyzes the monoubiquitination of POL30 'Lys-164', involved in postreplication repair of UV-damaged DNA. The RAD6/UBC2-RAD18 complex is also involved in prevention of spontaneous mutations caused by 7,8-dihydro-8-oxoguanine. In association with the E3 enzyme UBR1, is involved in N-end rule-dependent protein degradation. Also involved in sporulation. The sequence is that of Ubiquitin-conjugating enzyme E2 2 (RAD6) from Saccharomyces cerevisiae (strain ATCC 204508 / S288c) (Baker's yeast).